Here is a 920-residue protein sequence, read N- to C-terminus: Phosphoenolpyruvate carboxylase (920 aa).

Residues His138 and Lys583 contribute to the active site.

This sequence belongs to the PEPCase type 1 family. Mg(2+) is required as a cofactor.

It catalyses the reaction oxaloacetate + phosphate = phosphoenolpyruvate + hydrogencarbonate. Its function is as follows. Forms oxaloacetate, a four-carbon dicarboxylic acid source for the tricarboxylic acid cycle. This chain is Phosphoenolpyruvate carboxylase, found in Streptococcus pyogenes serotype M5 (strain Manfredo).